Here is a 301-residue protein sequence, read N- to C-terminus: Light-independent protochlorophyllide reductase iron-sulfur ATP-binding protein (301 aa).

The segment covering 1–13 (MNVTLRPPLAAAP) has biased composition (low complexity). Residues 1–22 (MNVTLRPPLAAAPRRPDGAGSV) are disordered. ATP-binding positions include 45 to 50 (GIGKST) and K74. Position 49 (S49) interacts with Mg(2+). C130 and C164 together coordinate [4Fe-4S] cluster. Residues 215-216 (NR) and 239-241 (PDL) contribute to the ATP site.

This sequence belongs to the NifH/BchL/ChlL family. As to quaternary structure, homodimer. Protochlorophyllide reductase is composed of three subunits; BchL, BchN and BchB. It depends on [4Fe-4S] cluster as a cofactor.

The catalysed reaction is chlorophyllide a + oxidized 2[4Fe-4S]-[ferredoxin] + 2 ADP + 2 phosphate = protochlorophyllide a + reduced 2[4Fe-4S]-[ferredoxin] + 2 ATP + 2 H2O. Its pathway is porphyrin-containing compound metabolism; bacteriochlorophyll biosynthesis (light-independent). In terms of biological role, component of the dark-operative protochlorophyllide reductase (DPOR) that uses Mg-ATP and reduced ferredoxin to reduce ring D of protochlorophyllide (Pchlide) to form chlorophyllide a (Chlide). This reaction is light-independent. The L component serves as a unique electron donor to the NB-component of the complex, and binds Mg-ATP. This is Light-independent protochlorophyllide reductase iron-sulfur ATP-binding protein from Bradyrhizobium sp. (strain ORS 278).